We begin with the raw amino-acid sequence, 168 residues long: G/U mismatch-specific DNA glycosylase (168 aa).

This sequence belongs to the uracil-DNA glycosylase (UDG) superfamily. TDG/mug family. Binds DNA as a monomer.

It is found in the cytoplasm. The catalysed reaction is Specifically hydrolyzes mismatched double-stranded DNA and polynucleotides, releasing free uracil.. Its function is as follows. Excises ethenocytosine and uracil, which can arise by alkylation or deamination of cytosine, respectively, from the corresponding mispairs with guanine in ds-DNA. It is capable of hydrolyzing the carbon-nitrogen bond between the sugar-phosphate backbone of the DNA and the mispaired base. The complementary strand guanine functions in substrate recognition. Required for DNA damage lesion repair in stationary-phase cells. This Salmonella paratyphi B (strain ATCC BAA-1250 / SPB7) protein is G/U mismatch-specific DNA glycosylase.